A 336-amino-acid chain; its full sequence is MIEADRLISAGTTLPEDVADRAIRPKLLEEYVGQPQVRSQMEIFIKAAKLRGDALDHLLIFGPPGLGKTTLANIVANEMGVNLRTTSGPVLEKAGDLAAMLTNLEPHDVLFIDEIHRLSPVVEEVLYPAMEDYQLDIMIGEGPAARSIKIDLPPFTLIGATTRAGSLTSPLRDRFGIVQRLEFYQVPDLQYIVSRSARFMGLEMSDDGALEVARRARGTPRIANRLLRRVRDFAEVKHDGTISADIAAQALDMLNVDAEGFDYMDRKLLLAVIDKFFGGPVGLDNLAAAIGEERETIEDVLEPYLIQQGFLQRTPRGRMATVRAWNHFGITPPEMP.

The tract at residues 4–184 is large ATPase domain (RuvB-L); that stretch reads ADRLISAGTT…FGIVQRLEFY (181 aa). ATP-binding positions include Ile23, Arg24, Gly65, Lys68, Thr69, Thr70, 131–133, Arg174, Tyr184, and Arg221; that span reads EDY. Position 69 (Thr69) interacts with Mg(2+). Residues 185 to 255 are small ATPAse domain (RuvB-S); sequence QVPDLQYIVS…IAAQALDMLN (71 aa). Residues 258–336 form a head domain (RuvB-H) region; that stretch reads AEGFDYMDRK…HFGITPPEMP (79 aa). DNA-binding residues include Arg294, Arg313, and Arg318.

The protein belongs to the RuvB family. Homohexamer. Forms an RuvA(8)-RuvB(12)-Holliday junction (HJ) complex. HJ DNA is sandwiched between 2 RuvA tetramers; dsDNA enters through RuvA and exits via RuvB. An RuvB hexamer assembles on each DNA strand where it exits the tetramer. Each RuvB hexamer is contacted by two RuvA subunits (via domain III) on 2 adjacent RuvB subunits; this complex drives branch migration. In the full resolvosome a probable DNA-RuvA(4)-RuvB(12)-RuvC(2) complex forms which resolves the HJ.

It is found in the cytoplasm. The catalysed reaction is ATP + H2O = ADP + phosphate + H(+). Its function is as follows. The RuvA-RuvB-RuvC complex processes Holliday junction (HJ) DNA during genetic recombination and DNA repair, while the RuvA-RuvB complex plays an important role in the rescue of blocked DNA replication forks via replication fork reversal (RFR). RuvA specifically binds to HJ cruciform DNA, conferring on it an open structure. The RuvB hexamer acts as an ATP-dependent pump, pulling dsDNA into and through the RuvAB complex. RuvB forms 2 homohexamers on either side of HJ DNA bound by 1 or 2 RuvA tetramers; 4 subunits per hexamer contact DNA at a time. Coordinated motions by a converter formed by DNA-disengaged RuvB subunits stimulates ATP hydrolysis and nucleotide exchange. Immobilization of the converter enables RuvB to convert the ATP-contained energy into a lever motion, pulling 2 nucleotides of DNA out of the RuvA tetramer per ATP hydrolyzed, thus driving DNA branch migration. The RuvB motors rotate together with the DNA substrate, which together with the progressing nucleotide cycle form the mechanistic basis for DNA recombination by continuous HJ branch migration. Branch migration allows RuvC to scan DNA until it finds its consensus sequence, where it cleaves and resolves cruciform DNA. The protein is Holliday junction branch migration complex subunit RuvB of Escherichia coli O17:K52:H18 (strain UMN026 / ExPEC).